The sequence spans 120 residues: ATP synthase subunit a (120 aa).

The next 4 helical transmembrane spans lie at 2–22 (FFYS…YSYL), 29–49 (FFPF…VGIV), 59–79 (LNIT…LGFY), and 94–116 (IPFV…RSVG).

Belongs to the ATPase A chain family. In terms of assembly, F-type ATPases have 2 components, CF(1) - the catalytic core - and CF(0) - the membrane proton channel. CF(1) has five subunits: alpha(3), beta(3), gamma(1), delta(1), epsilon(1). CF(0) has three main subunits: a, b and c.

It is found in the mitochondrion inner membrane. Mitochondrial membrane ATP synthase (F(1)F(0) ATP synthase or Complex V) produces ATP from ADP in the presence of a proton gradient across the membrane which is generated by electron transport complexes of the respiratory chain. F-type ATPases consist of two structural domains, F(1) - containing the extramembraneous catalytic core and F(0) - containing the membrane proton channel, linked together by a central stalk and a peripheral stalk. During catalysis, ATP synthesis in the catalytic domain of F(1) is coupled via a rotary mechanism of the central stalk subunits to proton translocation. Key component of the proton channel; it may play a direct role in the translocation of protons across the membrane. This chain is ATP synthase subunit a (ATP6), found in Naegleria fowleri (Brain eating amoeba).